The chain runs to 195 residues: UPF0301 protein CCNA_03506 (195 aa).

Belongs to the UPF0301 (AlgH) family.

The sequence is that of UPF0301 protein CCNA_03506 from Caulobacter vibrioides (strain NA1000 / CB15N) (Caulobacter crescentus).